Reading from the N-terminus, the 155-residue chain is Small ribosomal subunit protein uS7 (155 aa).

Belongs to the universal ribosomal protein uS7 family. Part of the 30S ribosomal subunit. Contacts proteins S9 and S11.

In terms of biological role, one of the primary rRNA binding proteins, it binds directly to 16S rRNA where it nucleates assembly of the head domain of the 30S subunit. Is located at the subunit interface close to the decoding center, probably blocks exit of the E-site tRNA. The chain is Small ribosomal subunit protein uS7 from Helicobacter hepaticus (strain ATCC 51449 / 3B1).